Here is a 122-residue protein sequence, read N- to C-terminus: Large ribosomal subunit protein uL14 (122 aa).

It belongs to the universal ribosomal protein uL14 family. As to quaternary structure, part of the 50S ribosomal subunit. Forms a cluster with proteins L3 and L19. In the 70S ribosome, L14 and L19 interact and together make contacts with the 16S rRNA in bridges B5 and B8. Can interact with ribosomal silencing factor RsfS, which may inhibit ribosomal subunit association.

Binds to 23S rRNA. Forms part of two intersubunit bridges in the 70S ribosome. The protein is Large ribosomal subunit protein uL14 of Synechocystis sp. (strain ATCC 27184 / PCC 6803 / Kazusa).